The primary structure comprises 511 residues: 2,3-bisphosphoglycerate-independent phosphoglycerate mutase (511 aa).

Position 12 (Asp12) interacts with Mn(2+). Position 36 is a phosphotyrosine (Tyr36). Ser62 is a Mn(2+) binding site. The active-site Phosphoserine intermediate is Ser62. Substrate-binding positions include His123, 153 to 154 (RD), Arg185, Arg191, 261 to 264 (RPDR), and Lys336. Mn(2+) is bound by residues Asp403, His407, Asp444, His445, and His462.

The protein belongs to the BPG-independent phosphoglycerate mutase family. Monomer. Mn(2+) is required as a cofactor.

It catalyses the reaction (2R)-2-phosphoglycerate = (2R)-3-phosphoglycerate. Its pathway is carbohydrate degradation; glycolysis; pyruvate from D-glyceraldehyde 3-phosphate: step 3/5. Its activity is regulated as follows. Could be inhibited during sporulation by acidification of the forespore, thus allowing accumulation of the spore's large depot of 3-phosphoglyceric acid. Essential for rapid growth and for sporulation. Catalyzes the interconversion of 2-phosphoglycerate (2-PGA) and 3-phosphoglycerate (3-PGA). This is 2,3-bisphosphoglycerate-independent phosphoglycerate mutase from Geobacillus stearothermophilus (Bacillus stearothermophilus).